The sequence spans 712 residues: Cyclolysin secretion/processing ATP-binding protein CyaB (712 aa).

Positions 7 to 128 (QCASVPDSGL…ALWAGELLLC (122 aa)) constitute a Peptidase C39 domain. The 283-residue stretch at 157 to 439 (IGEVLLISLV…LAQLWNDFQQ (283 aa)) folds into the ABC transmembrane type-1 domain. The next 6 helical transmembrane spans lie at 160–180 (VLLISLVLQFIALLTPLFFQV), 194–214 (LNVIAVGFLAAILFEALLTGI), 272–292 (AVTVLLDVVFSVVFIAVMFFY), 298–318 (LVVLAALPCYFLLSLVLTPVL), 367–387 (VAAGLSVANVAMLANTGVTLI), and 390–410 (LVALGVLWVGATEVVAQRMTV). In terms of domain architecture, ABC transporter spans 471-706 (IELDRVSFRY…GGLYARLQAL (236 aa)). ATP is bound at residue 505–512 (GRSGSGKS).

It belongs to the ABC transporter superfamily. Cyclolysin exporter (TC 3.A.1.109.2) family.

The protein localises to the cell membrane. Its function is as follows. Involved in the export of calmodulin-sensitive adenylate cyclase-hemolysin (cyclolysin). This is Cyclolysin secretion/processing ATP-binding protein CyaB (cyaB) from Bordetella pertussis (strain Tohama I / ATCC BAA-589 / NCTC 13251).